Here is a 95-residue protein sequence, read N- to C-terminus: Acylphosphatase (95 aa).

Residues 7 to 94 (AALVRITGRV…EAPAGFRITR (88 aa)) enclose the Acylphosphatase-like domain. Catalysis depends on residues arginine 22 and asparagine 40. A compositionally biased stretch (low complexity) spans 76–88 (VASEEASSAEAPA). The interval 76-95 (VASEEASSAEAPAGFRITRG) is disordered.

It belongs to the acylphosphatase family.

The enzyme catalyses an acyl phosphate + H2O = a carboxylate + phosphate + H(+). The chain is Acylphosphatase (acyP) from Rhizobium meliloti (strain 1021) (Ensifer meliloti).